Reading from the N-terminus, the 137-residue chain is Probable 4-amino-4-deoxy-L-arabinose-phosphoundecaprenol flippase subunit ArnF (137 aa).

3 helical membrane-spanning segments follow: residues 43-63 (AIAV…FWLL), 74-94 (YSLL…LPFF), and 98-118 (FTVS…TINL).

It belongs to the ArnF family. Heterodimer of ArnE and ArnF.

The protein resides in the cell inner membrane. It participates in bacterial outer membrane biogenesis; lipopolysaccharide biosynthesis. In terms of biological role, translocates 4-amino-4-deoxy-L-arabinose-phosphoundecaprenol (alpha-L-Ara4N-phosphoundecaprenol) from the cytoplasmic to the periplasmic side of the inner membrane. This chain is Probable 4-amino-4-deoxy-L-arabinose-phosphoundecaprenol flippase subunit ArnF, found in Pseudomonas savastanoi pv. phaseolicola (strain 1448A / Race 6) (Pseudomonas syringae pv. phaseolicola (strain 1448A / Race 6)).